Reading from the N-terminus, the 216-residue chain is Pyrrolidone-carboxylate peptidase (216 aa).

Residues E80, C143, and H168 contribute to the active site.

The protein belongs to the peptidase C15 family. Homotetramer.

It is found in the cytoplasm. It catalyses the reaction Release of an N-terminal pyroglutamyl group from a polypeptide, the second amino acid generally not being Pro.. In terms of biological role, removes 5-oxoproline from various penultimate amino acid residues except L-proline. The sequence is that of Pyrrolidone-carboxylate peptidase from Cupriavidus taiwanensis (strain DSM 17343 / BCRC 17206 / CCUG 44338 / CIP 107171 / LMG 19424 / R1) (Ralstonia taiwanensis (strain LMG 19424)).